The primary structure comprises 595 residues: Aspartate--tRNA ligase (595 aa).

Glu-176 serves as a coordination point for L-aspartate. An aspartate region spans residues 200-203 (QIFK). Arg-222 provides a ligand contact to L-aspartate. ATP contacts are provided by residues 222–224 (RDE) and Gln-231. Residue His-450 participates in L-aspartate binding. Glu-484 is a binding site for ATP. Residue Arg-491 participates in L-aspartate binding. 536-539 (GLDR) contacts ATP.

The protein belongs to the class-II aminoacyl-tRNA synthetase family. Type 1 subfamily. As to quaternary structure, homodimer.

It localises to the cytoplasm. It carries out the reaction tRNA(Asp) + L-aspartate + ATP = L-aspartyl-tRNA(Asp) + AMP + diphosphate. Its function is as follows. Catalyzes the attachment of L-aspartate to tRNA(Asp) in a two-step reaction: L-aspartate is first activated by ATP to form Asp-AMP and then transferred to the acceptor end of tRNA(Asp). This Halalkalibacterium halodurans (strain ATCC BAA-125 / DSM 18197 / FERM 7344 / JCM 9153 / C-125) (Bacillus halodurans) protein is Aspartate--tRNA ligase.